The primary structure comprises 465 residues: Cytochrome P450 85A2 (465 aa).

A helical membrane pass occupies residues 2-22 (GIMMMILGLLVIIVCLCTALL). Cysteine 415 provides a ligand contact to heme. The S-farnesyl cysteine moiety is linked to residue cysteine 462. Positions 462-465 (CSPY) match the Farnesylation CAAX motif motif.

This sequence belongs to the cytochrome P450 family. The cofactor is heme. Post-translationally, isoprenylated (farnesylated); this addition of a 15-carbon farnesyl isoprenoid to the carboxy terminus is required for endoplasmic reticulum localization and essential for the biosynthesis of brassinolide. Expressed in stems, hypocotyls, leaves, siliques, shoots, and roots, with a higher expression in apical shoots.

It localises to the membrane. It is found in the endoplasmic reticulum. The enzyme catalyses 6-deoxoteasterone + reduced [NADPH--hemoprotein reductase] + O2 = 6alpha-hydroxyteasterone + oxidized [NADPH--hemoprotein reductase] + H2O + H(+). It carries out the reaction 6alpha-hydroxytyphasterol + reduced [NADPH--hemoprotein reductase] + O2 = teasterone + oxidized [NADPH--hemoprotein reductase] + 2 H2O + H(+). It catalyses the reaction 3-dehydro-6-deoxoteasterone + reduced [NADPH--hemoprotein reductase] + O2 = 3-dehydro-6alpha-hydroxyteasterone + oxidized [NADPH--hemoprotein reductase] + H2O + H(+). The catalysed reaction is 3-dehydro-6alpha-hydroxyteasterone + reduced [NADPH--hemoprotein reductase] + O2 = 3-dehydroteasterone + oxidized [NADPH--hemoprotein reductase] + 2 H2O + H(+). The enzyme catalyses 6-deoxotyphasterol + reduced [NADPH--hemoprotein reductase] + O2 = 6alpha-hydroxytyphasterol + oxidized [NADPH--hemoprotein reductase] + H2O + H(+). It carries out the reaction 6alpha-hydroxytyphasterol + reduced [NADPH--hemoprotein reductase] + O2 = typhasterol + oxidized [NADPH--hemoprotein reductase] + 2 H2O + H(+). It catalyses the reaction 6-deoxocastasterone + reduced [NADPH--hemoprotein reductase] + O2 = 6alpha-hydroxycastasterone + oxidized [NADPH--hemoprotein reductase] + H2O + H(+). The catalysed reaction is 6alpha-hydroxycastasterone + reduced [NADPH--hemoprotein reductase] + O2 = castasterone + oxidized [NADPH--hemoprotein reductase] + 2 H2O + H(+). The enzyme catalyses 6-deoxo-28-norteasterone + 2 reduced [NADPH--hemoprotein reductase] + 2 O2 = 28-norteasterone + 2 oxidized [NADPH--hemoprotein reductase] + 3 H2O + 2 H(+). It carries out the reaction 6-deoxo-28-norteasterone + reduced [NADPH--hemoprotein reductase] + O2 = 6alpha-hydroxy-28-norteasterone + oxidized [NADPH--hemoprotein reductase] + H2O + H(+). It catalyses the reaction 6alpha-hydroxy-28-norteasterone + reduced [NADPH--hemoprotein reductase] + O2 = 28-norteasterone + oxidized [NADPH--hemoprotein reductase] + 2 H2O + H(+). The catalysed reaction is 6-deoxo-28-nortyphasterol + 2 reduced [NADPH--hemoprotein reductase] + 2 O2 = 28-nortyphasterol + 2 oxidized [NADPH--hemoprotein reductase] + 3 H2O + 2 H(+). The enzyme catalyses 6-deoxo-28-nortyphasterol + reduced [NADPH--hemoprotein reductase] + O2 = 6alpha-hydroxy-28-nortyphasterol + oxidized [NADPH--hemoprotein reductase] + H2O + H(+). It carries out the reaction 6alpha-hydroxy-28-nortyphasterol + reduced [NADPH--hemoprotein reductase] + O2 = 28-nortyphasterol + oxidized [NADPH--hemoprotein reductase] + 2 H2O + H(+). It catalyses the reaction 6-deoxo-28-norcastasterone + 2 reduced [NADPH--hemoprotein reductase] + 2 O2 = 28-norcastasterone + 2 oxidized [NADPH--hemoprotein reductase] + 3 H2O + 2 H(+). The catalysed reaction is 6-deoxo-28-norcastasterone + reduced [NADPH--hemoprotein reductase] + O2 = 6alpha-hydroxy-28-norcastasterone + oxidized [NADPH--hemoprotein reductase] + H2O + H(+). The enzyme catalyses 6alpha-hydroxy-28-norcastasterone + reduced [NADPH--hemoprotein reductase] + O2 = 28-norcastasterone + oxidized [NADPH--hemoprotein reductase] + 2 H2O + H(+). It carries out the reaction 3-dehydro-6-deoxo-28-norteasterone + 2 reduced [NADPH--hemoprotein reductase] + 2 O2 = 6-dehydro-28-norteasterone + 2 oxidized [NADPH--hemoprotein reductase] + 3 H2O + 2 H(+). It catalyses the reaction 3-dehydro-6-deoxo-28-norteasterone + reduced [NADPH--hemoprotein reductase] + O2 = 3-dehydro-6alpha-hydroxy-28-norteasterone + oxidized [NADPH--hemoprotein reductase] + H2O + H(+). The catalysed reaction is 3-dehydro-6alpha-hydroxy-28-norteasterone + reduced [NADPH--hemoprotein reductase] + O2 = 6-dehydro-28-norteasterone + oxidized [NADPH--hemoprotein reductase] + 2 H2O + H(+). The enzyme catalyses teasterone + reduced [NADPH--hemoprotein reductase] + O2 = 7-oxateasterone + oxidized [NADPH--hemoprotein reductase] + H2O + H(+). It carries out the reaction castasterone + reduced [NADPH--hemoprotein reductase] + O2 = brassinolide + oxidized [NADPH--hemoprotein reductase] + H2O + H(+). It catalyses the reaction typhasterol + reduced [NADPH--hemoprotein reductase] + O2 = 7-oxatyphasterol + oxidized [NADPH--hemoprotein reductase] + H2O + H(+). The catalysed reaction is 6-deoxocastasterone + 2 reduced [NADPH--hemoprotein reductase] + 2 O2 = castasterone + 2 oxidized [NADPH--hemoprotein reductase] + 3 H2O + 2 H(+). The enzyme catalyses 6-deoxoteasterone + 2 reduced [NADPH--hemoprotein reductase] + 2 O2 = teasterone + 2 oxidized [NADPH--hemoprotein reductase] + 3 H2O + 2 H(+). It carries out the reaction 6-deoxotyphasterol + 2 reduced [NADPH--hemoprotein reductase] + 2 O2 = typhasterol + 2 oxidized [NADPH--hemoprotein reductase] + 3 H2O + 2 H(+). It catalyses the reaction 3-dehydro-6-deoxoteasterone + 2 reduced [NADPH--hemoprotein reductase] + 2 O2 = 3-dehydroteasterone + 2 oxidized [NADPH--hemoprotein reductase] + 3 H2O + 2 H(+). The protein operates within plant hormone biosynthesis; brassinosteroid biosynthesis. Mediates Baeyer-Villiger oxidation and catalyzes the C6-oxidation step and lactonization in brassinosteroids biosynthesis. Converts 6-deoxocastasterone (6-deoxoCS) to castasterone (CS), and castasterone to brassinolide (BL). May also convert 6-deoxoteasterone (6-deoxoTE) to teasterone (TE), 3-dehydro-6-deoxoteasterone (6-deoxo3DT, 6-deoxo-3-DHT) to 3-dehydroteasterone (3DT, 3-DHT), and 6-deoxotyphasterol (6-deoxoTY) to typhasterol (TY). Also seems to be able to convert teasterone (TE) and typhasterol (TY) to 7-oxateasterone (7-OXTE) and 7-oxatyphasterol (7-OXTY), respectively. Catalyzes the conversion of 6-deoxo-28-norteasterone (6-deoxo-28-norTE) to 28-norteasterone (28-norTE), 6-deoxo-28-nordeoxoteasterone (6-deoxo-28-nor-3-DHT) to 28-nordeoxoteasterone (28-nor-3-DHT), 6-deoxo-28-nortyphasterol (6-deoxo-28-norTY) to 28-nortyphasterol (28-norTY) and 6-deoxo-28-norcastasterone (6-deoxo-28-norCS) to 28-norcastasterone (28-norCS). Involved in a negative regulation of responses to abscisic acid (ABA) and drought tolerance. The chain is Cytochrome P450 85A2 (CYP85A2) from Arabidopsis thaliana (Mouse-ear cress).